The primary structure comprises 93 residues: Small ribosomal subunit protein uS15c (93 aa).

The protein belongs to the universal ribosomal protein uS15 family. As to quaternary structure, part of the 30S ribosomal subunit.

The protein resides in the plastid. It is found in the chloroplast. This Jasminum nudiflorum (Winter jasmine) protein is Small ribosomal subunit protein uS15c (rps15).